Consider the following 589-residue polypeptide: Arginine--tRNA ligase (589 aa).

The 'HIGH' region motif lies at 132–142; the sequence is PNTNKPLHVGH.

Belongs to the class-I aminoacyl-tRNA synthetase family. As to quaternary structure, monomer.

The protein localises to the cytoplasm. It catalyses the reaction tRNA(Arg) + L-arginine + ATP = L-arginyl-tRNA(Arg) + AMP + diphosphate. The protein is Arginine--tRNA ligase of Treponema pallidum subsp. pallidum (strain SS14).